A 334-amino-acid chain; its full sequence is Protein-methionine-sulfoxide reductase catalytic subunit MsrP (334 aa).

A signal peptide (tat-type signal) is located at residues 1 to 44 (MKKNQFLKESDVTAESVFFMKRRQVLKALGISATALSLPHAAHA). Residues Asn88, 91–92 (YE), Cys146, Thr181, Asn233, Arg238, and 249–251 (GIK) contribute to the Mo-molybdopterin site.

Belongs to the MsrP family. As to quaternary structure, heterodimer of a catalytic subunit (MsrP) and a heme-binding subunit (MsrQ). Requires Mo-molybdopterin as cofactor. Predicted to be exported by the Tat system. The position of the signal peptide cleavage has not been experimentally proven.

The protein resides in the periplasm. It carries out the reaction L-methionyl-[protein] + a quinone + H2O = L-methionyl-(S)-S-oxide-[protein] + a quinol. The catalysed reaction is L-methionyl-[protein] + a quinone + H2O = L-methionyl-(R)-S-oxide-[protein] + a quinol. Its function is as follows. Part of the MsrPQ system that repairs oxidized periplasmic proteins containing methionine sulfoxide residues (Met-O), using respiratory chain electrons. Thus protects these proteins from oxidative-stress damage caused by reactive species of oxygen and chlorine generated by the host defense mechanisms. MsrPQ is essential for the maintenance of envelope integrity under bleach stress, rescuing a wide series of structurally unrelated periplasmic proteins from methionine oxidation, including the primary periplasmic chaperone SurA and the lipoprotein Pal. The catalytic subunit MsrP is non-stereospecific, being able to reduce both (R-) and (S-) diastereoisomers of methionine sulfoxide. The polypeptide is Protein-methionine-sulfoxide reductase catalytic subunit MsrP (Escherichia coli (strain K12 / MC4100 / BW2952)).